We begin with the raw amino-acid sequence, 250 residues long: Serine/arginine-rich splicing factor RS31A (250 aa).

2 RRM domains span residues 2–74 and 95–166; these read RHVY…WAKD and KTLF…YALR. Positions 170–250 are disordered; it reads EREDRYAGSR…SRSPIQRARG (81 aa). The span at 177–191 shows a compositional bias: basic residues; the sequence is GSRRRRSPSPVYRRR. Phosphoserine is present on residues S183, S185, S201, S218, and S243. Positions 192–230 are enriched in basic and acidic residues; that stretch reads PSPDYTRRRSPEYDRYKGPAPYERRKSPDYGRRSSDYGR.

This sequence belongs to the splicing factor SR family. RS subfamily. As to quaternary structure, component of the spliceosome. Interacts with MOS14.

The protein resides in the nucleus speckle. It localises to the nucleus. Its subcellular location is the nucleoplasm. Its function is as follows. Probably involved in intron recognition and spliceosome assembly. The sequence is that of Serine/arginine-rich splicing factor RS31A (RS31A) from Arabidopsis thaliana (Mouse-ear cress).